The sequence spans 249 residues: Geranylgeranylglyceryl phosphate synthase (249 aa).

Mg(2+) is bound by residues aspartate 20 and serine 49. Sn-glycerol 1-phosphate-binding positions include 169–175 (YLDAGSG), 200–201 (GG), and 222–223 (GN).

Belongs to the GGGP/HepGP synthase family. Group II subfamily. As to quaternary structure, homohexamer. The cofactor is Mg(2+).

The catalysed reaction is sn-glycerol 1-phosphate + (2E,6E,10E)-geranylgeranyl diphosphate = sn-3-O-(geranylgeranyl)glycerol 1-phosphate + diphosphate. Its function is as follows. Prenyltransferase that catalyzes the transfer of the geranylgeranyl moiety of geranylgeranyl diphosphate (GGPP) to the C3 hydroxyl of sn-glycerol-1-phosphate (G1P). The polypeptide is Geranylgeranylglyceryl phosphate synthase (Spirosoma linguale (strain ATCC 33905 / DSM 74 / LMG 10896 / Claus 1)).